Reading from the N-terminus, the 1347-residue chain is G-protein coupled receptor-associated sorting protein 1 (1347 aa).

Disordered regions lie at residues 1–75, 145–174, and 188–281; these read MTRA…AYAK, ESIP…SWYR, and DFKW…NSRS. Over residues 21-33 the composition is skewed to low complexity; it reads ENANAAEVEPEAP. The span at 211–226 shows a compositional bias: basic residues; it reads FRPRKSMKANNRFRHM. Over residues 263 to 278 the composition is skewed to basic and acidic residues; that stretch reads PKDKTKVWSKPKEEPN. S295 is subject to Phosphoserine. Disordered stretches follow at residues 310 to 344, 364 to 396, and 460 to 485; these read GEEA…AMSG, FSKS…QEAR, and QVSS…SKSM. Positions 316-325 are enriched in basic residues; the sequence is RSKPRARKGV. The segment covering 370 to 396 has biased composition (basic and acidic residues); sequence KKEPRTRAVPKEEVKTKARASTKQEAR. The span at 461–484 shows a compositional bias: polar residues; it reads VSSFCLGSGKKSSMESGPKATSKS. A phosphoserine mark is found at S619 and S626. Residue T860 is modified to Phosphothreonine. S862 is subject to Phosphoserine.

It belongs to the GPRASP family. As to quaternary structure, interacts with cytoplasmic tails of a variety of G-protein coupled receptors such as delta opioid receptor/OPRD1, beta-2 adrenergic receptor/ADRB2 and D4 dopamine receptor/DRD4 as well as D2 dopamine receptor/DRD2. Interacts with PER1. Interacts with BECN2; the interaction is direct. As to expression, expressed in the brain, with higher expression in the hippocampus, hypothalamus and olfactory bulb.

The protein localises to the cytoplasm. Functionally, modulates lysosomal sorting and functional down-regulation of a variety of G-protein coupled receptors. Targets receptors for degradation in lysosomes via its interaction with BECN2. The protein is G-protein coupled receptor-associated sorting protein 1 (Gprasp1) of Mus musculus (Mouse).